The primary structure comprises 478 residues: MTKKEERDAKLPPKSNFSEWYHELLRSAEIVDVRYPVKGMSVWYPFGFALRSHVYQIIKELLDVDHYETQFPLLIPETEFMKEAEHIKGFEDEVYWVTHGGRDPLDIKLALRPTSETAIYPMLKLWIRSHADLPLRIYQIVNTFRYETKHTRPLIRLREITSFKEAHTAHATWEEAAMQVEIAIQRYIEFYRRLAIPCLVSKRPSWDKFPGADYSIALDVIMPDGRTLQVGTAHLLGTNFAKTYEITYEDEHGEQRYVNQTCYGISERCIAALIAVHGDDKGLVLPWRVAPVQVVIVPIIFGEREPIIEVCRSIASTLAGRNIRVRLDDGDERPGAKFYKWEMRGVPVRIEIGPRDIKNGVVTIVRRDGVRKTLPMDERLVDAILIEAEELQTVLYNRAKEFMDSKIKLVSSLDEARSQVQSGVARVPWCGSVECGHALEDQIGANLLGEPRGDELPPMRCLVCGRESTGSTYMARQY.

This sequence belongs to the class-II aminoacyl-tRNA synthetase family. ProS type 3 subfamily. In terms of assembly, homodimer.

It localises to the cytoplasm. It carries out the reaction tRNA(Pro) + L-proline + ATP = L-prolyl-tRNA(Pro) + AMP + diphosphate. Its function is as follows. Catalyzes the attachment of proline to tRNA(Pro) in a two-step reaction: proline is first activated by ATP to form Pro-AMP and then transferred to the acceptor end of tRNA(Pro). The sequence is that of Proline--tRNA ligase from Methanothrix thermoacetophila (strain DSM 6194 / JCM 14653 / NBRC 101360 / PT) (Methanosaeta thermophila).